The following is a 972-amino-acid chain: Isoleucine--tRNA ligase (972 aa).

The 'HIGH' region motif lies at 63 to 73 (PYANGNIHIGH). L-isoleucyl-5'-AMP is bound at residue Glu-603. The short motif at 644 to 648 (KMSKS) is the 'KMSKS' region element. Lys-647 lines the ATP pocket.

Belongs to the class-I aminoacyl-tRNA synthetase family. IleS type 1 subfamily. In terms of assembly, monomer.

Its subcellular location is the cytoplasm. The catalysed reaction is tRNA(Ile) + L-isoleucine + ATP = L-isoleucyl-tRNA(Ile) + AMP + diphosphate. Its function is as follows. Catalyzes the attachment of isoleucine to tRNA(Ile). As IleRS can inadvertently accommodate and process structurally similar amino acids such as valine, to avoid such errors it has two additional distinct tRNA(Ile)-dependent editing activities. One activity is designated as 'pretransfer' editing and involves the hydrolysis of activated Val-AMP. The other activity is designated 'posttransfer' editing and involves deacylation of mischarged Val-tRNA(Ile). This is Isoleucine--tRNA ligase from Brucella melitensis biotype 1 (strain ATCC 23456 / CCUG 17765 / NCTC 10094 / 16M).